A 471-amino-acid chain; its full sequence is Amidophosphoribosyltransferase (471 aa).

The active-site Nucleophile is the Cys2. The 223-residue stretch at 2 to 224 folds into the Glutamine amidotransferase type-2 domain; the sequence is CGIFGIYSYE…PGEIIEIKDG (223 aa). Cys255 lines the [4Fe-4S] cluster pocket. Residues Ser302, Asp364, and Asp365 each coordinate Mg(2+). The [4Fe-4S] cluster site is built by Cys401, Cys450, and Cys453.

This sequence in the C-terminal section; belongs to the purine/pyrimidine phosphoribosyltransferase family. Mg(2+) serves as cofactor. The cofactor is [4Fe-4S] cluster.

The enzyme catalyses 5-phospho-beta-D-ribosylamine + L-glutamate + diphosphate = 5-phospho-alpha-D-ribose 1-diphosphate + L-glutamine + H2O. It functions in the pathway purine metabolism; IMP biosynthesis via de novo pathway; N(1)-(5-phospho-D-ribosyl)glycinamide from 5-phospho-alpha-D-ribose 1-diphosphate: step 1/2. Functionally, catalyzes the formation of phosphoribosylamine from phosphoribosylpyrophosphate (PRPP) and glutamine. The protein is Amidophosphoribosyltransferase of Methanocaldococcus jannaschii (strain ATCC 43067 / DSM 2661 / JAL-1 / JCM 10045 / NBRC 100440) (Methanococcus jannaschii).